The chain runs to 244 residues: Eukaryotic translation initiation factor 6 (244 aa).

Residues serine 174 and serine 175 each carry the phosphoserine; by CK1 modification.

The protein belongs to the eIF-6 family. As to quaternary structure, monomer. Associates with the 60S ribosomal subunit. Post-translationally, phosphorylation at Ser-174 and Ser-175 promotes nuclear export.

It is found in the cytoplasm. It localises to the nucleus. Its subcellular location is the nucleolus. In terms of biological role, binds to the 60S ribosomal subunit and prevents its association with the 40S ribosomal subunit to form the 80S initiation complex in the cytoplasm. Is also involved in ribosome biogenesis. Associates with pre-60S subunits in the nucleus and is involved in its nuclear export. This is Eukaryotic translation initiation factor 6 (tif6) from Schizosaccharomyces pombe (strain 972 / ATCC 24843) (Fission yeast).